Consider the following 121-residue polypeptide: Large ribosomal subunit protein bL19 (121 aa).

This sequence belongs to the bacterial ribosomal protein bL19 family.

In terms of biological role, this protein is located at the 30S-50S ribosomal subunit interface and may play a role in the structure and function of the aminoacyl-tRNA binding site. In Chlamydia trachomatis serovar L2 (strain ATCC VR-902B / DSM 19102 / 434/Bu), this protein is Large ribosomal subunit protein bL19.